The chain runs to 270 residues: Hairy and enhancer of split-related protein helt (270 aa).

The segment at 1–24 (MNARALYKRPPPVSSSQSEASGKR) is disordered. One can recognise a bHLH domain in the interval 59–114 (KTPVSHKVIEKRRRDRINRCLNELGKTVPMALAKQNSGKLEKAEILEMTVQYLRAL). The region spanning 136–171 (FHYGYHECMKNLVHYLTTVERMETKDTKYARILAFL) is the Orange domain.

It belongs to the HEY family.

The protein localises to the nucleus. Functionally, transcriptional repressor which binds preferentially to the canonical E box sequence 5'-CACGCG-3'. The polypeptide is Hairy and enhancer of split-related protein helt (helt) (Danio rerio (Zebrafish)).